A 740-amino-acid chain; its full sequence is ATP-dependent DNA helicase Hel308 (740 aa).

Residues Gln28 and 46-53 (IPTASGKT) contribute to the ATP site. The 172-residue stretch at 33–204 (RQGLLDGKNL…WMDAALVQSE (172 aa)) folds into the Helicase ATP-binding domain. Positions 149–152 (DEVH) match the DEAH box motif. The Helicase C-terminal domain maps to 236-436 (EVNSLVADTL…EPAMRAHALS (201 aa)). The segment at 716 to 740 (VDHTPPETEEQPQVSGQSTLFSFDG) is disordered. Positions 726–740 (QPQVSGQSTLFSFDG) are enriched in polar residues.

The protein belongs to the helicase family. Hel308 subfamily. As to quaternary structure, monomer.

The catalysed reaction is Couples ATP hydrolysis with the unwinding of duplex DNA by translocating in the 3'-5' direction.. It carries out the reaction ATP + H2O = ADP + phosphate + H(+). Its function is as follows. DNA-dependent ATPase and 3'-5' DNA helicase that may be involved in repair of stalled replication forks. The polypeptide is ATP-dependent DNA helicase Hel308 (Methanocella arvoryzae (strain DSM 22066 / NBRC 105507 / MRE50)).